The following is a 233-amino-acid chain: Orotidine 5'-phosphate decarboxylase (233 aa).

Substrate is bound by residues aspartate 11, lysine 34, 61 to 70 (DLKLHDIPNT), threonine 117, arginine 179, glutamine 189, glycine 209, and arginine 210. The active-site Proton donor is the lysine 63.

It belongs to the OMP decarboxylase family. Type 1 subfamily. Homodimer.

The catalysed reaction is orotidine 5'-phosphate + H(+) = UMP + CO2. It participates in pyrimidine metabolism; UMP biosynthesis via de novo pathway; UMP from orotate: step 2/2. In terms of biological role, catalyzes the decarboxylation of orotidine 5'-monophosphate (OMP) to uridine 5'-monophosphate (UMP). In Streptococcus agalactiae serotype V (strain ATCC BAA-611 / 2603 V/R), this protein is Orotidine 5'-phosphate decarboxylase.